The primary structure comprises 210 residues: NDR1/HIN1-like protein 12 (210 aa).

Residues 23–43 (GVIIGFIIIVLITIFLVWIIL) traverse the membrane as a helical segment. The N-linked (GlcNAc...) asparagine glycan is linked to Asn-61.

May form oligomers or be a component of larger protein complex in plasma membranes. Expressed in leaves, stems and flowers, and, to a lower extent, in siliques and roots.

It localises to the cell membrane. Its function is as follows. May play a role in plant immunity. This chain is NDR1/HIN1-like protein 12, found in Arabidopsis thaliana (Mouse-ear cress).